We begin with the raw amino-acid sequence, 398 residues long: Mu-type opioid receptor (398 aa).

The Extracellular portion of the chain corresponds to 1–66; it reads MDSSAGPGNI…CPQTGSPSMV (66 aa). Asn9, Asn31, Asn38, and Asn46 each carry an N-linked (GlcNAc...) asparagine glycan. Residues 67-91 traverse the membrane as a helical segment; it reads TAITIMALYSIVCVVGLFGNFLVMY. Residues 92–104 are Cytoplasmic-facing; that stretch reads VIVRYTKMKTATN. The helical transmembrane segment at 105 to 129 threads the bilayer; it reads IYIFNLALADALATSTLPFQSVNYL. Over 130–140 the chain is Extracellular; sequence MGTWPFGNILC. Cys140 and Cys217 are oxidised to a cystine. A helical membrane pass occupies residues 141 to 163; it reads KIVISIDYYNMFTSIFTLCTMSV. Over 164–183 the chain is Cytoplasmic; sequence DRYIAVCHPVKALDFRTPRN. Tyr166 carries the phosphotyrosine modification. Residues 184 to 205 form a helical membrane-spanning segment; sequence AKIVNVCNWILSSAIGLPVMFM. The Extracellular segment spans residues 206 to 228; sequence ATTKYRQGSIDCTLTFSHPTWYW. A helical membrane pass occupies residues 229–253; sequence ENLLKICVFIFAFIMPVLIITVCYG. Residues 254 to 277 are Cytoplasmic-facing; that stretch reads LMILRLKSVRMLSGSKEKDRNLRR. A helical membrane pass occupies residues 278 to 304; it reads ITRMVLVVVAVFIVCWTPIHIYVIIKA. At 305–312 the chain is on the extracellular side; it reads LITIPETT. The chain crosses the membrane as a helical span at residues 313–336; it reads FQTVSWHFCIALGYTNSCLNPVLY. Residues 332 to 336 carry the NPxxY; plays a role in stabilizing the activated conformation of the receptor motif; it reads NPVLY. The Cytoplasmic segment spans residues 337 to 398; the sequence is AFLDENFKRC…NLEAETAPLP (62 aa). Cys351 carries the S-palmitoyl cysteine lipid modification. The disordered stretch occupies residues 362–383; that stretch reads NSARIRQNTREHPSTANTVDRT. Ser363 is subject to Phosphoserine. Position 370 is a phosphothreonine (Thr370). At Ser375 the chain carries Phosphoserine. Thr394 carries the post-translational modification Phosphothreonine.

Belongs to the G-protein coupled receptor 1 family. As to quaternary structure, forms homooligomers and heterooligomers with other GPCRs, such as OPRD1, OPRK1, OPRL1, NPFFR2, ADRA2A, SSTR2, CNR1 and CCR5 (probably in dimeric forms). Interacts with heterotrimeric G proteins; interaction with a heterotrimeric complex containing GNAI1, GNB1 and GNG2 stabilizes the active conformation of the receptor and increases its affinity for endomorphin-2, the synthetic opioid peptide DAMGO and for morphinan agonists. Interacts with PPL; the interaction disrupts agonist-mediated G-protein activation. Interacts (via C-terminus) with DNAJB4 (via C-terminus). Interacts with calmodulin; the interaction inhibits the constitutive activity of OPRM1; it abolishes basal and attenuates agonist-stimulated G-protein coupling. Interacts with FLNA, PLD2, RANBP9 and WLS and GPM6A. Interacts with RTP4. Interacts with SYP and GNAS. Interacts with RGS9, RGS17, RGS20, RGS4, PPP1R9B and HINT1. Isoform 9 interacts with GRPR. Phosphorylated. Differentially phosphorylated in basal and agonist-induced conditions. Agonist-mediated phosphorylation modulates receptor internalization. Phosphorylated by GRK2 in a agonist-dependent manner. Phosphorylation at Tyr-166 requires receptor activation, is dependent on non-receptor protein tyrosine kinase Src and results in a decrease in agonist efficacy by reducing G-protein coupling efficiency. Phosphorylated on tyrosine residues; the phosphorylation is involved in agonist-induced G-protein-independent receptor down-regulation. Phosphorylation at Ser-375 is involved in G-protein-dependent but not beta-arrestin-dependent activation of the ERK pathway. In terms of processing, ubiquitinated. A basal ubiquitination seems not to be related to degradation. Ubiquitination is increased upon formation of OPRM1:OPRD1 oligomers leading to proteasomal degradation; the ubiquitination is diminished by RTP4.

It localises to the cell membrane. The protein localises to the cell projection. Its subcellular location is the axon. The protein resides in the perikaryon. It is found in the dendrite. It localises to the endosome. In terms of biological role, receptor for endogenous opioids such as beta-endorphin and endomorphin. Receptor for natural and synthetic opioids including morphine, heroin, DAMGO, fentanyl, etorphine, buprenorphin and methadone. Also activated by enkephalin peptides, such as Met-enkephalin or Met-enkephalin-Arg-Phe, with higher affinity for Met-enkephalin-Arg-Phe. Agonist binding to the receptor induces coupling to an inactive GDP-bound heterotrimeric G-protein complex and subsequent exchange of GDP for GTP in the G-protein alpha subunit leading to dissociation of the G-protein complex with the free GTP-bound G-protein alpha and the G-protein beta-gamma dimer activating downstream cellular effectors. The agonist- and cell type-specific activity is predominantly coupled to pertussis toxin-sensitive G(i) and G(o) G alpha proteins, GNAI1, GNAI2, GNAI3 and GNAO1 isoforms Alpha-1 and Alpha-2, and to a lesser extent to pertussis toxin-insensitive G alpha proteins GNAZ and GNA15. They mediate an array of downstream cellular responses, including inhibition of adenylate cyclase activity and both N-type and L-type calcium channels, activation of inward rectifying potassium channels, mitogen-activated protein kinase (MAPK), phospholipase C (PLC), phosphoinositide/protein kinase (PKC), phosphoinositide 3-kinase (PI3K) and regulation of NF-kappa-B. Also couples to adenylate cyclase stimulatory G alpha proteins. The selective temporal coupling to G-proteins and subsequent signaling can be regulated by RGSZ proteins, such as RGS9, RGS17 and RGS4. Phosphorylation by members of the GPRK subfamily of Ser/Thr protein kinases and association with beta-arrestins is involved in short-term receptor desensitization. Beta-arrestins associate with the GPRK-phosphorylated receptor and uncouple it from the G-protein thus terminating signal transduction. The phosphorylated receptor is internalized through endocytosis via clathrin-coated pits which involves beta-arrestins. The activation of the ERK pathway occurs either in a G-protein-dependent or a beta-arrestin-dependent manner and is regulated by agonist-specific receptor phosphorylation. Acts as a class A G-protein coupled receptor (GPCR) which dissociates from beta-arrestin at or near the plasma membrane and undergoes rapid recycling. Receptor down-regulation pathways are varying with the agonist and occur dependent or independent of G-protein coupling. Endogenous ligands induce rapid desensitization, endocytosis and recycling. Heterooligomerization with other GPCRs can modulate agonist binding, signaling and trafficking properties. Its function is as follows. Isoform 9 is involved in morphine-induced scratching and seems to cross-activate GRPR in response to morphine. This chain is Mu-type opioid receptor (Oprm1), found in Mus musculus (Mouse).